A 314-amino-acid polypeptide reads, in one-letter code: Cytochrome f (314 aa).

An N-terminal signal peptide occupies residues 1–30; the sequence is MATNKFFKSLLFALTIAINSFGFCIQDAVA. Residues Tyr31, Cys51, Cys54, and His55 each contribute to the heme site. The helical transmembrane segment at 280-300 threads the bilayer; sequence IYGYLAFCFSVLITQIMLVLK.

Belongs to the cytochrome f family. The 4 large subunits of the cytochrome b6-f complex are cytochrome b6, subunit IV (17 kDa polypeptide, petD), cytochrome f and the Rieske protein, while the 4 small subunits are PetG, PetL, PetM and PetN. The complex functions as a dimer. Heme is required as a cofactor.

The protein resides in the plastid. The protein localises to the chloroplast thylakoid membrane. Component of the cytochrome b6-f complex, which mediates electron transfer between photosystem II (PSII) and photosystem I (PSI), cyclic electron flow around PSI, and state transitions. This Phaeodactylum tricornutum (strain CCAP 1055/1) protein is Cytochrome f.